We begin with the raw amino-acid sequence, 334 residues long: N-chimaerin (334 aa).

Positions 1–10 are enriched in polar residues; that stretch reads MPSKESWSGR. The segment at 1–22 is disordered; that stretch reads MPSKESWSGRKTNRATVHKSKQ. Position 67 is a phosphothreonine (Thr-67). A Phorbol-ester/DAG-type zinc finger spans residues 80 to 130; that stretch reads VHNFKVHTFRGPHWCEYCANFMWGLIAQGVKCADCGLNVHKQCSKMVPNDC. Residues 143–334 enclose the Rho-GAP domain; sequence CDLTTLVKAR…LLIKNEDILF (192 aa). Thr-215 carries the phosphothreonine modification.

As to quaternary structure, interacts with EPHA4; effector of EPHA4 in axon guidance linking EPHA4 activation to RAC1 regulation. In terms of processing, phosphorylated. Phosphorylation is EPHA4 kinase activity-dependent.

Its function is as follows. GTPase-activating protein for p21-rac and a phorbol ester receptor. Involved in the assembly of neuronal locomotor circuits as a direct effector of EPHA4 in axon guidance. The polypeptide is N-chimaerin (CHN1) (Bos taurus (Bovine)).